Here is a 31-residue protein sequence, read N- to C-terminus: Cyclotide cter-R (31 aa).

The segment at residues 1–31 is a cross-link (cyclopeptide (Gly-Asn)); sequence GIPCGESCVFIPCTVTALLGCSCKDKVCYKN. Intrachain disulfides connect cysteine 4-cysteine 21, cysteine 8-cysteine 23, and cysteine 13-cysteine 28.

Post-translationally, this is a cyclic peptide.

The protein resides in the secreted. In terms of biological role, probably participates in a plant defense mechanism. This chain is Cyclotide cter-R, found in Clitoria ternatea (Butterfly pea).